Here is a 377-residue protein sequence, read N- to C-terminus: Trans-enoyl reductase FMN2 (377 aa).

The region spanning 7–370 is the Enoyl reductase (ER) domain; it reads NASGGYCLNS…DGVIRGKKLV (364 aa). Residues 143 to 173 form a disordered region; that stretch reads LSDMTGNGRSNGYTNGHTNGHTNGHSKGEEE. Residues 144 to 155 show a composition bias toward polar residues; sequence SDMTGNGRSNGY. Positions 156–167 are enriched in low complexity; sequence TNGHTNGHTNGH. NADP(+) is bound by residues 186-189, 209-212, tyrosine 227, and 274-275; these read ASAS, SPAN, and LD.

It belongs to the zinc-containing alcohol dehydrogenase family.

It participates in secondary metabolite biosynthesis. Its function is as follows. Trans-enoyl reductase; part of the gene cluster that mediates the biosynthesis of fusamarins, isocoumarin derivatives that show moderate cytotoxicity with IC(50) values between 1 and 50 uM. The polyketide synthase FMN1 probably synthesizes two different polyketides, a tetra- and a pentaketide, containinga varying number of double bonds depending on the selective actions of the trans-enoyl reductase FMN2. Chain fusion will presumably be mediated by the KS domain before finally offloading is catalyzed by the alpha/beta hydrolase fold enzyme FMN3. This is Trans-enoyl reductase FMN2 from Fusarium mangiferae (Mango malformation disease fungus).